A 174-amino-acid chain; its full sequence is Small ribosomal subunit protein uS5 (174 aa).

The region spanning 17 to 80 (WQERVVQIRR…ADGKKHLIDV (64 aa)) is the S5 DRBM domain.

It belongs to the universal ribosomal protein uS5 family. Part of the 30S ribosomal subunit. Contacts proteins S4 and S8.

In terms of biological role, with S4 and S12 plays an important role in translational accuracy. Located at the back of the 30S subunit body where it stabilizes the conformation of the head with respect to the body. The sequence is that of Small ribosomal subunit protein uS5 from Thermosynechococcus vestitus (strain NIES-2133 / IAM M-273 / BP-1).